The primary structure comprises 191 residues: Transcription factor FapR (191 aa).

It belongs to the FapR family.

Transcriptional factor involved in regulation of membrane lipid biosynthesis by repressing genes involved in fatty acid and phospholipid metabolism. The protein is Transcription factor FapR of Oceanobacillus iheyensis (strain DSM 14371 / CIP 107618 / JCM 11309 / KCTC 3954 / HTE831).